Here is a 279-residue protein sequence, read N- to C-terminus: Pantothenate synthetase (279 aa).

26–33 contributes to the ATP binding site; that stretch reads MGNLHEGH. Histidine 33 functions as the Proton donor in the catalytic mechanism. Glutamine 57 serves as a coordination point for (R)-pantoate. Residue glutamine 57 coordinates beta-alanine. 144-147 lines the ATP pocket; the sequence is GKKD. Position 150 (glutamine 150) interacts with (R)-pantoate. ATP-binding positions include valine 173 and 181 to 184; that span reads LSSR.

This sequence belongs to the pantothenate synthetase family. In terms of assembly, homodimer.

The protein resides in the cytoplasm. The enzyme catalyses (R)-pantoate + beta-alanine + ATP = (R)-pantothenate + AMP + diphosphate + H(+). It participates in cofactor biosynthesis; (R)-pantothenate biosynthesis; (R)-pantothenate from (R)-pantoate and beta-alanine: step 1/1. Catalyzes the condensation of pantoate with beta-alanine in an ATP-dependent reaction via a pantoyl-adenylate intermediate. This chain is Pantothenate synthetase, found in Burkholderia thailandensis (strain ATCC 700388 / DSM 13276 / CCUG 48851 / CIP 106301 / E264).